The following is a 185-amino-acid chain: Ribosome-recycling factor (185 aa).

It belongs to the RRF family.

The protein localises to the cytoplasm. Responsible for the release of ribosomes from messenger RNA at the termination of protein biosynthesis. May increase the efficiency of translation by recycling ribosomes from one round of translation to another. The sequence is that of Ribosome-recycling factor from Thermotoga petrophila (strain ATCC BAA-488 / DSM 13995 / JCM 10881 / RKU-1).